Here is a 488-residue protein sequence, read N- to C-terminus: Probable glycine dehydrogenase (decarboxylating) subunit 2 (488 aa).

Lysine 273 is subject to N6-(pyridoxal phosphate)lysine.

This sequence belongs to the GcvP family. C-terminal subunit subfamily. As to quaternary structure, the glycine cleavage system is composed of four proteins: P, T, L and H. In this organism, the P 'protein' is a heterodimer of two subunits. It depends on pyridoxal 5'-phosphate as a cofactor.

The catalysed reaction is N(6)-[(R)-lipoyl]-L-lysyl-[glycine-cleavage complex H protein] + glycine + H(+) = N(6)-[(R)-S(8)-aminomethyldihydrolipoyl]-L-lysyl-[glycine-cleavage complex H protein] + CO2. The glycine cleavage system catalyzes the degradation of glycine. The P protein binds the alpha-amino group of glycine through its pyridoxal phosphate cofactor; CO(2) is released and the remaining methylamine moiety is then transferred to the lipoamide cofactor of the H protein. This Halalkalibacterium halodurans (strain ATCC BAA-125 / DSM 18197 / FERM 7344 / JCM 9153 / C-125) (Bacillus halodurans) protein is Probable glycine dehydrogenase (decarboxylating) subunit 2.